Here is a 350-residue protein sequence, read N- to C-terminus: Putative F-box protein At1g23770 (350 aa).

Over residues 1 to 15 the composition is skewed to polar residues; it reads MDTGFADSNNDSSPG. Positions 1–29 are disordered; the sequence is MDTGFADSNNDSSPGEGSKRGNSGIEGPV. Residues 206 to 252 enclose the F-box domain; that stretch reads PPCLMLLPTELKLKILELLPGVSIGYMACVCTEMRYLASDNDLWEHK.

The sequence is that of Putative F-box protein At1g23770 from Arabidopsis thaliana (Mouse-ear cress).